A 364-amino-acid polypeptide reads, in one-letter code: 3-isopropylmalate dehydrogenase (364 aa).

Residue 76–89 (GPKWEKLPPNEQPE) participates in NAD(+) binding. Substrate contacts are provided by Arg97, Arg107, Arg136, and Asp225. Positions 225, 249, and 253 each coordinate Mg(2+). Residue 283–295 (GSAPDIAGKGIAN) participates in NAD(+) binding.

It belongs to the isocitrate and isopropylmalate dehydrogenases family. LeuB type 1 subfamily. As to quaternary structure, homodimer. The cofactor is Mg(2+). Mn(2+) serves as cofactor.

The protein resides in the cytoplasm. The catalysed reaction is (2R,3S)-3-isopropylmalate + NAD(+) = 4-methyl-2-oxopentanoate + CO2 + NADH. The protein operates within amino-acid biosynthesis; L-leucine biosynthesis; L-leucine from 3-methyl-2-oxobutanoate: step 3/4. In terms of biological role, catalyzes the oxidation of 3-carboxy-2-hydroxy-4-methylpentanoate (3-isopropylmalate) to 3-carboxy-4-methyl-2-oxopentanoate. The product decarboxylates to 4-methyl-2 oxopentanoate. In Shewanella oneidensis (strain ATCC 700550 / JCM 31522 / CIP 106686 / LMG 19005 / NCIMB 14063 / MR-1), this protein is 3-isopropylmalate dehydrogenase.